The chain runs to 284 residues: tRNA-splicing endonuclease (284 aa).

Active-site residues include Tyr-222, His-229, and Lys-257.

Belongs to the tRNA-intron endonuclease family. Archaeal long subfamily. Homodimer.

The catalysed reaction is pretRNA = a 3'-half-tRNA molecule with a 5'-OH end + a 5'-half-tRNA molecule with a 2',3'-cyclic phosphate end + an intron with a 2',3'-cyclic phosphate and a 5'-hydroxyl terminus.. Functionally, endonuclease that removes tRNA introns. Cleaves pre-tRNA at the 5'- and 3'-splice sites to release the intron. The products are an intron and two tRNA half-molecules bearing 2',3' cyclic phosphate and 5'-OH termini. Recognizes a pseudosymmetric substrate in which 2 bulged loops of 3 bases are separated by a stem of 4 bp. In Picrophilus torridus (strain ATCC 700027 / DSM 9790 / JCM 10055 / NBRC 100828 / KAW 2/3), this protein is tRNA-splicing endonuclease.